The chain runs to 342 residues: S-adenosylmethionine:tRNA ribosyltransferase-isomerase (342 aa).

Belongs to the QueA family. Monomer.

The protein resides in the cytoplasm. The enzyme catalyses 7-aminomethyl-7-carbaguanosine(34) in tRNA + S-adenosyl-L-methionine = epoxyqueuosine(34) in tRNA + adenine + L-methionine + 2 H(+). It participates in tRNA modification; tRNA-queuosine biosynthesis. In terms of biological role, transfers and isomerizes the ribose moiety from AdoMet to the 7-aminomethyl group of 7-deazaguanine (preQ1-tRNA) to give epoxyqueuosine (oQ-tRNA). The polypeptide is S-adenosylmethionine:tRNA ribosyltransferase-isomerase (Bacillus pumilus (strain SAFR-032)).